Here is a 367-residue protein sequence, read N- to C-terminus: Apolipoprotein A-V (367 aa).

The signal sequence occupies residues 1-20 (MVAVLTWALALLSAFATVQT). Position 56 is a phosphoserine (Ser-56). The disordered stretch occupies residues 71–90 (LGPLSGQGREPPGLPHDPEG).

This sequence belongs to the apolipoprotein A1/A4/E family. Interacts with GPIHBP1. Interacts with SORL1; this interaction leads to APOA5 internalization and sorting either to lysosomes and degradation, or to the trans-Golgi network. Post-translationally, phosphorylated by FAM20C in the extracellular medium.

Its subcellular location is the secreted. It is found in the early endosome. It localises to the late endosome. The protein resides in the golgi apparatus. The protein localises to the trans-Golgi network. Functionally, minor apolipoprotein mainly associated with HDL and to a lesser extent with VLDL. May also be associated with chylomicrons. Important determinant of plasma triglyceride (TG) levels by both being a potent stimulator of apo-CII lipoprotein lipase (LPL) TG hydrolysis and an inhibitor of the hepatic VLDL-TG production rate (without affecting the VLDL-apoB production rate). Activates poorly lecithin:cholesterol acyltransferase (LCAT) and does not enhance efflux of cholesterol from macrophages. Binds heparin. The sequence is that of Apolipoprotein A-V (APOA5) from Leptonychotes weddellii (Weddell seal).